The sequence spans 720 residues: Glutaryl-7-aminocephalosporanic-acid acylase (720 aa).

The first 29 residues, methionine 1–alanine 29, serve as a signal peptide directing secretion. A propeptide spans glutamate 188–glycine 198 (spacer peptide). The active-site Nucleophile is the serine 199. Residues histidine 221 and glutamate 653 contribute to the active site.

This sequence belongs to the peptidase S45 family. Heterodimer of a small subunit and a large subunit processed from the same precursor.

Its subcellular location is the periplasm. The enzyme catalyses (7R)-7-(4-carboxybutanamido)cephalosporanate + H2O = (7R)-7-aminocephalosporanate + glutarate. Catalyzes the deacylation of 7 beta-(4-carboxybutanamido)cephalosporanic acid (glutaryl-7-aminocephalosporanic acid or GL-7-ACA) to 7-aminocephalosporanic acid (7-ACA). Cannot efficiently use cephalosporin C (CPC), penicillin G, or ampicillin as substrates. The polypeptide is Glutaryl-7-aminocephalosporanic-acid acylase (Brevundimonas diminuta (Pseudomonas diminuta)).